The chain runs to 183 residues: MADAARARRLAKRIAAIVASAIEYEIKDPGLAGVTITDAKVTADLHDATVYYTVMGRTLHDEPNCAGAAAALERAKGVLRTKVGAGTGVRFTPTLTFTLDTISDSVHRMDELLARARAADADLARVRVGAKPAGEADPYRDNGSVAQSPAPGGLGIRTSDGPEAVEAPLTCGGDTGDDDRPKE.

The segment at 132 to 183 (PAGEADPYRDNGSVAQSPAPGGLGIRTSDGPEAVEAPLTCGGDTGDDDRPKE) is disordered.

This sequence belongs to the RbfA family. As to quaternary structure, monomer. Binds 30S ribosomal subunits, but not 50S ribosomal subunits or 70S ribosomes.

The protein localises to the cytoplasm. Its function is as follows. One of several proteins that assist in the late maturation steps of the functional core of the 30S ribosomal subunit. Associates with free 30S ribosomal subunits (but not with 30S subunits that are part of 70S ribosomes or polysomes). Required for efficient processing of 16S rRNA. May interact with the 5'-terminal helix region of 16S rRNA. The chain is Ribosome-binding factor A from Mycobacterium tuberculosis (strain ATCC 25177 / H37Ra).